A 374-amino-acid polypeptide reads, in one-letter code: Large ribosomal subunit protein uL4 (374 aa).

The disordered stretch occupies residues 336-355 (EKAMAKGMQNKKNREARHAA).

It belongs to the universal ribosomal protein uL4 family.

This chain is Large ribosomal subunit protein uL4 (RPL4), found in Trypanosoma brucei brucei.